Reading from the N-terminus, the 888-residue chain is Bifunctional lysine-specific demethylase and histidyl-hydroxylase NO66 (888 aa).

Disordered stretches follow at residues 83 to 157 (AAAK…GSFS), 187 to 208 (SNNS…DSDA), and 261 to 446 (NSTS…NKLS). Basic and acidic residues predominate over residues 98-108 (REKNIAKKQPE). Over residues 116 to 139 (ENVQKQLENGQENNGTLINLSNGK) the composition is skewed to polar residues. The segment covering 192–207 (FDFDSDGDSNDFDDSD) has biased composition (acidic residues). Residues 273-284 (VEPRKAAKRNEP) are compositionally biased toward basic and acidic residues. Over residues 392-403 (KNKNNDNNNIDT) the composition is skewed to low complexity. Over residues 404–429 (NNKKDANNKKDANNNKDINNKKDANN) the composition is skewed to basic and acidic residues. Low complexity predominate over residues 430–444 (NKDTNNNKDNNNKNK). The JmjC domain maps to 564–709 (CSIRILNPST…NLLEVLMPSV (146 aa)). Fe cation contacts are provided by His610, Asp612, and His675.

The protein belongs to the ROX family. NO66 subfamily. Fe(2+) serves as cofactor.

It localises to the nucleus. It catalyses the reaction N(6),N(6)-dimethyl-L-lysyl(36)-[histone H3] + 2 2-oxoglutarate + 2 O2 = L-lysyl(36)-[histone H3] + 2 formaldehyde + 2 succinate + 2 CO2. In terms of biological role, oxygenase that can act as both a histone lysine demethylase and a ribosomal histidine hydroxylase. Specifically demethylates 'Lys-4' (H3K4me) and 'Lys-36' (H3K36me) of histone H3, thereby playing a central role in histone code. The chain is Bifunctional lysine-specific demethylase and histidyl-hydroxylase NO66 from Drosophila mojavensis (Fruit fly).